We begin with the raw amino-acid sequence, 503 residues long: V-type proton ATPase subunit B (503 aa).

Arg378 is an ATP binding site. A phosphoserine mark is found at Ser491, Ser492, Ser502, and Ser503.

This sequence belongs to the ATPase alpha/beta chains family. In terms of assembly, V-ATPase is a heteromultimeric enzyme composed of a peripheral catalytic V1 complex (components A to H) attached to an integral membrane V0 proton pore complex (components: a, c, c', c'', d, e, f and VOA1). Interacts with rav1.

Its subcellular location is the vacuole membrane. Non-catalytic subunit of the V1 complex of vacuolar(H+)-ATPase (V-ATPase), a multisubunit enzyme composed of a peripheral complex (V1) that hydrolyzes ATP and a membrane integral complex (V0) that translocates protons. V-ATPase is responsible for acidifying and maintaining the pH of intracellular compartments. The protein is V-type proton ATPase subunit B of Schizosaccharomyces pombe (strain 972 / ATCC 24843) (Fission yeast).